A 360-amino-acid chain; its full sequence is Photosystem II protein D1 (360 aa).

3 helical membrane passes run 29-46 (YIGW…TATS), 118-133 (HFLL…EWEL), and 142-156 (WIFV…AASA). H118 serves as a coordination point for chlorophyll a. Y126 is a pheophytin a binding site. 2 residues coordinate [CaMn4O5] cluster: D170 and E189. A helical membrane pass occupies residues 197-218 (FHMAGVAGVFGGSLFSAMHGSL). Position 198 (H198) interacts with chlorophyll a. A quinone contacts are provided by residues H215 and 264–265 (SF). Position 215 (H215) interacts with Fe cation. Residue H272 coordinates Fe cation. The helical transmembrane segment at 274–288 (FLALWPVVGIWLTAM) threads the bilayer. [CaMn4O5] cluster-binding residues include H332, E333, D342, and A344. The propeptide occupies 345–360 (SGEVLPVALTAPAVNG).

This sequence belongs to the reaction center PufL/M/PsbA/D family. PSII is composed of 1 copy each of membrane proteins PsbA, PsbB, PsbC, PsbD, PsbE, PsbF, PsbH, PsbI, PsbJ, PsbK, PsbL, PsbM, PsbT, PsbX, PsbY, PsbZ, Psb30/Ycf12, at least 3 peripheral proteins of the oxygen-evolving complex and a large number of cofactors. It forms dimeric complexes. Requires The D1/D2 heterodimer binds P680, chlorophylls that are the primary electron donor of PSII, and subsequent electron acceptors. It shares a non-heme iron and each subunit binds pheophytin, quinone, additional chlorophylls, carotenoids and lipids. D1 provides most of the ligands for the Mn4-Ca-O5 cluster of the oxygen-evolving complex (OEC). There is also a Cl(-1) ion associated with D1 and D2, which is required for oxygen evolution. The PSII complex binds additional chlorophylls, carotenoids and specific lipids. as cofactor. Tyr-161 forms a radical intermediate that is referred to as redox-active TyrZ, YZ or Y-Z. In terms of processing, C-terminally processed by CTPA; processing is essential to allow assembly of the oxygen-evolving complex and thus photosynthetic growth.

It is found in the plastid. The protein resides in the chloroplast thylakoid membrane. It carries out the reaction 2 a plastoquinone + 4 hnu + 2 H2O = 2 a plastoquinol + O2. Its function is as follows. Photosystem II (PSII) is a light-driven water:plastoquinone oxidoreductase that uses light energy to abstract electrons from H(2)O, generating O(2) and a proton gradient subsequently used for ATP formation. It consists of a core antenna complex that captures photons, and an electron transfer chain that converts photonic excitation into a charge separation. The D1/D2 (PsbA/PsbD) reaction center heterodimer binds P680, the primary electron donor of PSII as well as several subsequent electron acceptors. In Phaeodactylum tricornutum (strain CCAP 1055/1), this protein is Photosystem II protein D1.